Reading from the N-terminus, the 656-residue chain is Probable serine/threonine-protein kinase sky1 (656 aa).

Residues 1 to 127 form a disordered region; sequence MSDIQQDSTS…KQGGYHPVRR (127 aa). Positions 16-48 are enriched in gly residues; sequence TSLGGTSLGGTSLGGTSLGGTSLGGTSLGGTSL. Low complexity-rich tracts occupy residues 49–64 and 72–89; these read GGST…STNS and TSSN…NNNE. The span at 96 to 108 shows a compositional bias: polar residues; the sequence is AGSSNKSFMPLNN. Residues 135–648 form the Protein kinase domain; sequence YQVVDKLGWG…AKDCLNHTWL (514 aa). 141-149 is a binding site for ATP; sequence LGWGHFSTV. Residues 157-185 form a disordered region; that stretch reads TPITTSSSSSSTTTTTTSSSSNGNGNGNG. Residues 160–179 show a composition bias toward low complexity; it reads TTSSSSSSTTTTTTSSSSNG. Lys-197 provides a ligand contact to ATP. Asp-298 (proton acceptor) is an active-site residue. The interval 330-454 is disordered; it reads RTSSSNKQSQ…TTATATATTT (125 aa). Residues 332–355 are compositionally biased toward low complexity; it reads SSSNKQSQQQQQPQQQQSQQNIND. Composition is skewed to basic and acidic residues over residues 383–401 and 413–440; these read SNRD…DDNK and ENTD…KEEP. The segment covering 441–454 has biased composition (low complexity); it reads TTTTTTATATATTT.

It belongs to the protein kinase superfamily. CMGC Ser/Thr protein kinase family.

It catalyses the reaction L-seryl-[protein] + ATP = O-phospho-L-seryl-[protein] + ADP + H(+). The catalysed reaction is L-threonyl-[protein] + ATP = O-phospho-L-threonyl-[protein] + ADP + H(+). The sequence is that of Probable serine/threonine-protein kinase sky1 (sky1) from Dictyostelium discoideum (Social amoeba).